A 323-amino-acid polypeptide reads, in one-letter code: Elongation factor P--(R)-beta-lysine ligase (323 aa).

76 to 78 (SPE) is a binding site for substrate. ATP contacts are provided by residues 100–102 (RNE) and N109. Substrate is bound at residue Y118. 242-243 (EL) is an ATP binding site. Position 249 (E249) interacts with substrate. Residue G298 participates in ATP binding.

It belongs to the class-II aminoacyl-tRNA synthetase family. EpmA subfamily. As to quaternary structure, homodimer.

The enzyme catalyses D-beta-lysine + L-lysyl-[protein] + ATP = N(6)-((3R)-3,6-diaminohexanoyl)-L-lysyl-[protein] + AMP + diphosphate + H(+). Functionally, with EpmB is involved in the beta-lysylation step of the post-translational modification of translation elongation factor P (EF-P). Catalyzes the ATP-dependent activation of (R)-beta-lysine produced by EpmB, forming a lysyl-adenylate, from which the beta-lysyl moiety is then transferred to the epsilon-amino group of a conserved specific lysine residue in EF-P. The chain is Elongation factor P--(R)-beta-lysine ligase from Haemophilus influenzae (strain PittGG).